A 947-amino-acid chain; its full sequence is Leucine-rich repeat-containing protein 37B (947 aa).

The N-terminal stretch at 1-27 is a signal peptide; that stretch reads MSWLRFWGPWPLLTWQLLSLLVKEAQP. The Extracellular segment spans residues 28–905; sequence LVWVKDPLQL…EVPGDDYKNK (878 aa). Disordered stretches follow at residues 42–88, 226–257, 294–458, and 484–514; these read LGPP…ALPQ, YLSM…QVGL, EVEP…PEPT, and SLTE…EQKA. The segment covering 311–320 has biased composition (polar residues); sequence SMESLAQTPL. The N-linked (GlcNAc...) asparagine glycan is linked to Asn358. 3 stretches are compositionally biased toward polar residues: residues 404-415, 436-445, and 495-507; these read GQAQHSHLTEAT, SPTTEETSAQ, and LESS…QSET. LRR repeat units follow at residues 556–577, 580–601, 604–625, 628–649, 655–676, and 679–699; these read IFTT…VWKA, WTEK…SFEG, YLQY…TFES, FLQY…TFQA, FLHN…YLFE, and ALKY…KNIL. N-linked (GlcNAc...) asparagine glycosylation is present at Asn789. Residues 867–897 adopt a coiled-coil conformation; the sequence is DTDQQKTNYINENMEQNEQKEQKSSELMKEV. Residues 906–926 traverse the membrane as a helical segment; that stretch reads LIFAISVTVILIILIIIFCLI. Topologically, residues 927-947 are cytoplasmic; that stretch reads EVNSHKRASEKYKDNPSISGA.

The protein resides in the membrane. The sequence is that of Leucine-rich repeat-containing protein 37B (LRRC37B) from Homo sapiens (Human).